We begin with the raw amino-acid sequence, 485 residues long: Adenylate kinase 8 (485 aa).

2 adenylate kinase regions span residues 58–258 and 269–471; these read PRVF…TFVL and PRIL…SYIV. 67–72 is a binding site for ATP; sequence ASGKHT. The tract at residues 87 to 113 is NMP 1; that stretch reads TPENVLSSDVSLLVKEAQSYRDKGQEV. AMP-binding positions include 140-143 and Q147; that span reads GFPK. The tract at residues 177 to 206 is LID 1; that stretch reads GKRIDITDGEVYHTTFDWPSDPAVQRNLVE. R218 contributes to the AMP binding site. 278–283 provides a ligand contact to ATP; that stretch reads GSGRSL. The tract at residues 298–327 is NMP 2; it reads CCGQVLKEAVADQTKLGELIQPYIENDQQV. Residues 325 to 327, 354 to 357, and Q361 contribute to the AMP site; these read QQV and GFPQ. The tract at residues 391–424 is LID 2; the sequence is LCMTDPVSGERYHSIYKPAPRSEVQERLQQNPKY. R432 contacts AMP.

This sequence belongs to the adenylate kinase family.

It is found in the cytoplasm. The protein localises to the cytosol. It catalyses the reaction AMP + ATP = 2 ADP. The catalysed reaction is a 2'-deoxyribonucleoside 5'-diphosphate + ATP = a 2'-deoxyribonucleoside 5'-triphosphate + ADP. The enzyme catalyses a ribonucleoside 5'-diphosphate + ATP = a ribonucleoside 5'-triphosphate + ADP. Nucleoside monophosphate (NMP) kinase that catalyzes the reversible transfer of the terminal phosphate group between nucleoside triphosphates and monophosphates. Has highest activity toward AMP, and weaker activity toward dAMP, CMP and dCMP. Also displays broad nucleoside diphosphate kinase activity. The sequence is that of Adenylate kinase 8 (ak8) from Xenopus laevis (African clawed frog).